The sequence spans 261 residues: Cytochrome c oxidase subunit 3 (261 aa).

The Mitochondrial matrix portion of the chain corresponds to 1-15 (MTNQLHPFHMTNPSP). A helical membrane pass occupies residues 16–34 (WPLTGATAALLMTSGLIMW). Residues 35–40 (FHYNSS) are Mitochondrial intermembrane-facing. The chain crosses the membrane as a helical span at residues 41–66 (QLIMLGLLIMLLTLTQWWRDIVREST). Residues 67–72 (FQGHHT) are Mitochondrial matrix-facing. A helical membrane pass occupies residues 73-105 (PSVQNNLRYGMILFITSEILFFTGFFWAFYHSS). Topologically, residues 106 to 128 (LSPTAELGNIWPPTGITPLNPFE) are mitochondrial intermembrane. A helical membrane pass occupies residues 129 to 152 (VPLLNTAVLLASGVTITWAHHSLM). The Mitochondrial matrix portion of the chain corresponds to 153 to 155 (EGN). A helical transmembrane segment spans residues 156–183 (RPQTLQALTLTIILGTYFTILQAMEYFE). The Mitochondrial intermembrane segment spans residues 184 to 190 (ASFTIAD). The chain crosses the membrane as a helical span at residues 191–223 (SIYGSTFFVATGFHGLHVIIGSTFLIVCLMRQL). Over 224 to 232 (KYHFTSHHH) the chain is Mitochondrial matrix. A helical membrane pass occupies residues 233 to 256 (FGFEAAAWYWHFVDVIWLFLYLSI). Topologically, residues 257–261 (YWWGS) are mitochondrial intermembrane.

Belongs to the cytochrome c oxidase subunit 3 family. Component of the cytochrome c oxidase (complex IV, CIV), a multisubunit enzyme composed of 14 subunits. The complex is composed of a catalytic core of 3 subunits MT-CO1, MT-CO2 and MT-CO3, encoded in the mitochondrial DNA, and 11 supernumerary subunits COX4I, COX5A, COX5B, COX6A, COX6B, COX6C, COX7A, COX7B, COX7C, COX8 and NDUFA4, which are encoded in the nuclear genome. The complex exists as a monomer or a dimer and forms supercomplexes (SCs) in the inner mitochondrial membrane with NADH-ubiquinone oxidoreductase (complex I, CI) and ubiquinol-cytochrome c oxidoreductase (cytochrome b-c1 complex, complex III, CIII), resulting in different assemblies (supercomplex SCI(1)III(2)IV(1) and megacomplex MCI(2)III(2)IV(2)).

It is found in the mitochondrion inner membrane. It catalyses the reaction 4 Fe(II)-[cytochrome c] + O2 + 8 H(+)(in) = 4 Fe(III)-[cytochrome c] + 2 H2O + 4 H(+)(out). In terms of biological role, component of the cytochrome c oxidase, the last enzyme in the mitochondrial electron transport chain which drives oxidative phosphorylation. The respiratory chain contains 3 multisubunit complexes succinate dehydrogenase (complex II, CII), ubiquinol-cytochrome c oxidoreductase (cytochrome b-c1 complex, complex III, CIII) and cytochrome c oxidase (complex IV, CIV), that cooperate to transfer electrons derived from NADH and succinate to molecular oxygen, creating an electrochemical gradient over the inner membrane that drives transmembrane transport and the ATP synthase. Cytochrome c oxidase is the component of the respiratory chain that catalyzes the reduction of oxygen to water. Electrons originating from reduced cytochrome c in the intermembrane space (IMS) are transferred via the dinuclear copper A center (CU(A)) of subunit 2 and heme A of subunit 1 to the active site in subunit 1, a binuclear center (BNC) formed by heme A3 and copper B (CU(B)). The BNC reduces molecular oxygen to 2 water molecules using 4 electrons from cytochrome c in the IMS and 4 protons from the mitochondrial matrix. The chain is Cytochrome c oxidase subunit 3 (MT-CO3) from Pelomedusa subrufa (African side-necked turtle).